Here is an 872-residue protein sequence, read N- to C-terminus: Alanine--tRNA ligase (872 aa).

Zn(2+) contacts are provided by His-567, His-571, Cys-669, and His-673.

It belongs to the class-II aminoacyl-tRNA synthetase family. Requires Zn(2+) as cofactor.

It is found in the cytoplasm. It carries out the reaction tRNA(Ala) + L-alanine + ATP = L-alanyl-tRNA(Ala) + AMP + diphosphate. Functionally, catalyzes the attachment of alanine to tRNA(Ala) in a two-step reaction: alanine is first activated by ATP to form Ala-AMP and then transferred to the acceptor end of tRNA(Ala). Also edits incorrectly charged Ser-tRNA(Ala) and Gly-tRNA(Ala) via its editing domain. The polypeptide is Alanine--tRNA ligase (Streptococcus sanguinis (strain SK36)).